A 290-amino-acid chain; its full sequence is L-proline cis-3-hydroxylase 1 (290 aa).

Fe cation contacts are provided by H107, D109, and H158. 2-oxoglutarate is bound at residue R168.

It belongs to the L-proline cis-4-/cis-3-hydroxylase family. In terms of assembly, homodimer. It depends on Fe(2+) as a cofactor.

It carries out the reaction L-proline + 2-oxoglutarate + O2 = cis-3-hydroxy-L-proline + succinate + CO2. Inhibited by metal ions such as Co(2+), Zn(2+), Ni(2+) or Cu(2+). Is also inhibited by EDTA in vitro. Unlike the procollagen-proline cis-3- and trans-4-hydroxylases from mammals, does not necessarily require L-ascorbate for activity although it does increase the activity of the enzyme. Dioxygenase that catalyzes the 2-oxoglutarate-dependent selective hydroxylation of free L-proline to cis-3-hydroxy-L-proline (cis-3-Hyp). D-proline, trans-4-hydroxy-L-proline, cis-4-hydroxy-L-proline, cis-4-hydroxy-D-proline, and 3,4-dehydro-DL-proline are not substrates. The protein is L-proline cis-3-hydroxylase 1 of Streptomyces sp.